The following is a 211-amino-acid chain: Probable nicotinate-nucleotide adenylyltransferase (211 aa).

Belongs to the NadD family.

It catalyses the reaction nicotinate beta-D-ribonucleotide + ATP + H(+) = deamido-NAD(+) + diphosphate. It functions in the pathway cofactor biosynthesis; NAD(+) biosynthesis; deamido-NAD(+) from nicotinate D-ribonucleotide: step 1/1. In terms of biological role, catalyzes the reversible adenylation of nicotinate mononucleotide (NaMN) to nicotinic acid adenine dinucleotide (NaAD). The chain is Probable nicotinate-nucleotide adenylyltransferase from Thermoanaerobacter sp. (strain X514).